Here is an 863-residue protein sequence, read N- to C-terminus: Leucine--tRNA ligase (863 aa).

A 'HIGH' region motif is present at residues 42-53 (PYPSGSGLHVGH). The 'KMSKS' region motif lies at 635-639 (KMSKS). Lys-638 provides a ligand contact to ATP.

The protein belongs to the class-I aminoacyl-tRNA synthetase family.

The protein resides in the cytoplasm. The enzyme catalyses tRNA(Leu) + L-leucine + ATP = L-leucyl-tRNA(Leu) + AMP + diphosphate. The sequence is that of Leucine--tRNA ligase from Salinibacter ruber (strain DSM 13855 / M31).